The sequence spans 83 residues: Mu-theraphotoxin-Hhn2f (83 aa).

The first 21 residues, 1 to 21, serve as a signal peptide directing secretion; that stretch reads MKASMFLALAGLVLLFVVGYA. A propeptide spanning residues 22 to 48 is cleaved from the precursor; that stretch reads SESEEKEFPIELLSKIFAVDVFKGEER. Disulfide bonds link cysteine 50–cysteine 65, cysteine 57–cysteine 70, and cysteine 64–cysteine 77. Leucine 81 carries the post-translational modification Leucine amide.

The protein belongs to the neurotoxin 10 (Hwtx-1) family. 15 (Hntx-3) subfamily. In terms of assembly, monomer. Expressed by the venom gland.

It localises to the secreted. In terms of biological role, lethal neurotoxin. Selectively blocks tetrodotoxin-sensitive voltage-gated sodium channels (Nav). Does not affect tetrodotoxin-resistant voltage-gated sodium channels or calcium channels. The chain is Mu-theraphotoxin-Hhn2f from Cyriopagopus hainanus (Chinese bird spider).